The sequence spans 233 residues: tRNA (guanine-N(7)-)-methyltransferase (233 aa).

The tract at residues 1-21 (MTEESHPLRGAGNFFGRRHGK) is disordered. S-adenosyl-L-methionine contacts are provided by E64, E89, D116, and D138. Residue D138 is part of the active site. Substrate contacts are provided by residues K142, D174, and 212–215 (TRYE).

It belongs to the class I-like SAM-binding methyltransferase superfamily. TrmB family.

It carries out the reaction guanosine(46) in tRNA + S-adenosyl-L-methionine = N(7)-methylguanosine(46) in tRNA + S-adenosyl-L-homocysteine. Its pathway is tRNA modification; N(7)-methylguanine-tRNA biosynthesis. In terms of biological role, catalyzes the formation of N(7)-methylguanine at position 46 (m7G46) in tRNA. The chain is tRNA (guanine-N(7)-)-methyltransferase from Brucella anthropi (strain ATCC 49188 / DSM 6882 / CCUG 24695 / JCM 21032 / LMG 3331 / NBRC 15819 / NCTC 12168 / Alc 37) (Ochrobactrum anthropi).